A 305-amino-acid polypeptide reads, in one-letter code: Glycine--tRNA ligase alpha subunit (305 aa).

It belongs to the class-II aminoacyl-tRNA synthetase family. In terms of assembly, tetramer of two alpha and two beta subunits.

Its subcellular location is the cytoplasm. The enzyme catalyses tRNA(Gly) + glycine + ATP = glycyl-tRNA(Gly) + AMP + diphosphate. This is Glycine--tRNA ligase alpha subunit from Vibrio vulnificus (strain CMCP6).